A 473-amino-acid polypeptide reads, in one-letter code: Glutamate--tRNA ligase (473 aa).

The 'HIGH' region signature appears at 11 to 21 (PSPTGFLHIGG). The 'KMSKS' region signature appears at 240 to 244 (KLSKR). Lysine 243 contacts ATP.

Belongs to the class-I aminoacyl-tRNA synthetase family. Glutamate--tRNA ligase type 1 subfamily. Monomer.

The protein resides in the cytoplasm. It catalyses the reaction tRNA(Glu) + L-glutamate + ATP = L-glutamyl-tRNA(Glu) + AMP + diphosphate. Functionally, catalyzes the attachment of glutamate to tRNA(Glu) in a two-step reaction: glutamate is first activated by ATP to form Glu-AMP and then transferred to the acceptor end of tRNA(Glu). This is Glutamate--tRNA ligase from Rhodopseudomonas palustris (strain HaA2).